A 366-amino-acid polypeptide reads, in one-letter code: Carboxy-cis,cis-muconate cyclase (366 aa).

Catalysis depends on residues His-149, Arg-197, Glu-213, and Arg-275.

The protein belongs to the cycloisomerase 2 family. In terms of assembly, homotetramer.

It catalyses the reaction 3-carboxy-2,5-dihydro-5-oxofuran-2-acetate = 3-carboxy-cis,cis-muconate. It functions in the pathway aromatic compound metabolism; beta-ketoadipate pathway; 3-carboxy-cis,cis-muconate from 3-carboxy-2,5-dihydro-5-oxofuran-2-acetate: step 1/1. Functionally, catalyzes a syn cycloisomerization. Also possesses mle activity. The chain is Carboxy-cis,cis-muconate cyclase from Neurospora crassa (strain ATCC 24698 / 74-OR23-1A / CBS 708.71 / DSM 1257 / FGSC 987).